Here is an 843-residue protein sequence, read N- to C-terminus: Glycogen phosphorylase, muscle form (843 aa).

An N-acetylserine modification is found at serine 2. A Phosphoserine; by PHK; in form phosphorylase A modification is found at serine 15. AMP-binding residues include aspartate 43 and tyrosine 76. A phosphotyrosine mark is found at tyrosine 204 and tyrosine 227. 310–319 (RRFKSSKFGC) is an AMP binding site. Residue serine 430 is modified to Phosphoserine. The residue at position 473 (tyrosine 473) is a Phosphotyrosine. Serine 514 is subject to Phosphoserine. The residue at position 681 (lysine 681) is an N6-(pyridoxal phosphate)lysine. Serine 747 and serine 748 each carry phosphoserine.

Belongs to the glycogen phosphorylase family. As to quaternary structure, homodimer. Homotetramer; to form the enzymatically active phosphorylase A. The cofactor is pyridoxal 5'-phosphate. In terms of processing, phosphorylation of Ser-15 converts phosphorylase B (unphosphorylated) to phosphorylase A.

The catalysed reaction is [(1-&gt;4)-alpha-D-glucosyl](n) + phosphate = [(1-&gt;4)-alpha-D-glucosyl](n-1) + alpha-D-glucose 1-phosphate. Allosterically regulated through the non-covalent binding of metabolites, being activated by AMP and inhibited by ATP, ADP, and glucose-6-phosphate. The activity is also controlled by post-translational modifications including phosphorylation. Allosteric enzyme that catalyzes the rate-limiting step in glycogen catabolism, the phosphorolytic cleavage of glycogen to produce glucose-1-phosphate, and plays a central role in maintaining cellular and organismal glucose homeostasis. The sequence is that of Glycogen phosphorylase, muscle form from Oryctolagus cuniculus (Rabbit).